The sequence spans 490 residues: ATP synthase subunit beta, chloroplastic (490 aa).

Residue 170 to 177 participates in ATP binding; it reads GGAGVGKT.

The protein belongs to the ATPase alpha/beta chains family. As to quaternary structure, F-type ATPases have 2 components, CF(1) - the catalytic core - and CF(0) - the membrane proton channel. CF(1) has five subunits: alpha(3), beta(3), gamma(1), delta(1), epsilon(1). CF(0) has four main subunits: a(1), b(1), b'(1) and c(9-12).

The protein localises to the plastid. It localises to the chloroplast thylakoid membrane. It carries out the reaction ATP + H2O + 4 H(+)(in) = ADP + phosphate + 5 H(+)(out). Produces ATP from ADP in the presence of a proton gradient across the membrane. The catalytic sites are hosted primarily by the beta subunits. The polypeptide is ATP synthase subunit beta, chloroplastic (Cressa truxillensis (Spreading alkaliweed)).